Reading from the N-terminus, the 1334-residue chain is Adenylate cyclase type 9 (1334 aa).

Disordered regions lie at residues 1-28 and 49-71; these read MASPPHQQLLHHHSTEVSCDSSGDSNSV and ISSSCSSGESGGVGRGGGGGLRR. Topologically, residues 1 to 113 are cytoplasmic; sequence MASPPHQQLL…CFPQTQRRFR (113 aa). Positions 16 to 28 are enriched in polar residues; the sequence is EVSCDSSGDSNSV. A compositionally biased stretch (gly residues) spans 57–69; that stretch reads ESGGVGRGGGGGL. The chain crosses the membrane as a helical span at residues 114 to 134; it reads YALFYIGSACLLWGIYFGVHM. Topologically, residues 135-137 are extracellular; it reads REK. Residues 138 to 158 form a helical membrane-spanning segment; sequence QMVFMVPALCFLLVCVAFFAF. Residues 159-167 lie on the Cytoplasmic side of the membrane; it reads TFTKAYARR. A helical transmembrane segment spans residues 168-187; sequence YVWTSGYTLLVFALTLAPQF. Topologically, residues 188-207 are extracellular; that stretch reads QPWTLGERQRVQPRPAAPVD. The helical transmembrane segment at 208–227 threads the bilayer; it reads TCLSQVGSFSMCVEVLLLLY. Residues 228-233 lie on the Cytoplasmic side of the membrane; sequence TVMHLP. A helical transmembrane segment spans residues 234–250; it reads LYLSLFLGLSYSVLFET. Residues 251–269 are Extracellular-facing; it reads SAFRDESCTLLGGGAVYWE. The helical transmembrane segment at 270–290 threads the bilayer; that stretch reads LLSKAFLHVCIHAIGIHLFIM. Topologically, residues 291–768 are cytoplasmic; it reads SEVRSRSTFL…VKTFASATFS (478 aa). A disordered region spans residues 338–363; the sequence is QGDDESENSVKRHSTSSPKNRKKKPS. Residues 348–363 are compositionally biased toward basic residues; that stretch reads KRHSTSSPKNRKKKPS. Residues Asp-388, Ile-389, and Asp-432 each coordinate Mg(2+). Residues 388 to 393, 430 to 432, and Arg-476 contribute to the ATP site; these read DIVGFT and LGD. Residues 635-670 are disordered; it reads GCQDEHKNSTKAPGGHSPKTQNGLLSPPQEEKLSNS. The helical transmembrane segment at 769–789 threads the bilayer; that stretch reads SLLDVFLSTTVFLILSVTCFL. The Extracellular segment spans residues 790-800; the sequence is KHGMVASPPPP. A helical membrane pass occupies residues 801 to 821; that stretch reads AAVVVFVIAILLEVLSLVISV. Residues 822 to 849 lie on the Cytoplasmic side of the membrane; the sequence is RMVFFLEEVMACTKRLLELISGWLPRHF. Residues 850 to 870 form a helical membrane-spanning segment; sequence LGAILVSLPALAVFSHFTSDF. At 871–873 the chain is on the extracellular side; sequence ETN. A helical transmembrane segment spans residues 874 to 894; that stretch reads IHYTMFMCCAILIAIVQYCNF. Residues 895–902 lie on the Cytoplasmic side of the membrane; that stretch reads CQLSSWMR. Residues 903-923 form a helical membrane-spanning segment; it reads SLLATVVGAVLLILLYVSLCP. At 924–957 the chain is on the extracellular side; it reads DSSVETLHLDLAQNLSSRKSPCNSSMPADVKRPA. Asn-937 and Asn-946 each carry an N-linked (GlcNAc...) asparagine glycan. A helical transmembrane segment spans residues 958 to 978; the sequence is DLIGQEVILAVFLLLLLVWFL. Residues 979–1334 lie on the Cytoplasmic side of the membrane; sequence NRSFEVSYRL…LTKLNVSKSV (356 aa). ATP-binding positions include Lys-1090, 1167-1169, 1174-1178, and Lys-1214; these read DIW and NIASR. The disordered stretch occupies residues 1266-1303; that stretch reads SVQNSDKTAHATDNSETKDALPSSKKLQKEPTKAEERC. Basic and acidic residues-rich tracts occupy residues 1272–1284 and 1292–1303; these read KTAHATDNSETKD and LQKEPTKAEERC.

It belongs to the adenylyl cyclase class-4/guanylyl cyclase family. Mg(2+) serves as cofactor. It depends on Mn(2+) as a cofactor. As to expression, detected in embryonic heart (at protein level).

It localises to the cell membrane. Its subcellular location is the membrane. The enzyme catalyses ATP = 3',5'-cyclic AMP + diphosphate. With respect to regulation, insensitive to calcium/calmodulin, forskolin and somatostatin. Stimulated by beta-adrenergic receptor activation. Activity is down-regulated by calcium/calcineurin. Adenylyl cyclase that catalyzes the formation of the signaling molecule cAMP in response to activation of G protein-coupled receptors. In Gallus gallus (Chicken), this protein is Adenylate cyclase type 9 (ADCY9).